Consider the following 739-residue polypeptide: Polyribonucleotide nucleotidyltransferase (739 aa).

Residues Asp-489 and Asp-495 each contribute to the Mg(2+) site. The region spanning 556–615 (PKIDTIKIDVDKIKIVIGKGGETIDKIIAETGVKIDIDEDGLVAIFSPDRAAIERTKEII) is the KH domain. The S1 motif domain occupies 625–693 (DEVFQAKVVR…DKGRIDASMK (69 aa)). Residues 699 to 739 (PEGYVEPEKRERSEKPRRHKEHKEKKDNNFGEFKFHKVDKK) form a disordered region. Basic and acidic residues predominate over residues 722–739 (EKKDNNFGEFKFHKVDKK).

The protein belongs to the polyribonucleotide nucleotidyltransferase family. Mg(2+) serves as cofactor.

Its subcellular location is the cytoplasm. The enzyme catalyses RNA(n+1) + phosphate = RNA(n) + a ribonucleoside 5'-diphosphate. Involved in mRNA degradation. Catalyzes the phosphorolysis of single-stranded polyribonucleotides processively in the 3'- to 5'-direction. In Streptococcus suis (strain 98HAH33), this protein is Polyribonucleotide nucleotidyltransferase.